Here is a 193-residue protein sequence, read N- to C-terminus: RNA polymerase sigma-H factor (193 aa).

The Polymerase core binding signature appears at 49–62 (DVAQEAFIKAYRAL). The H-T-H motif DNA-binding region spans 157–176 (YEDIATVMQCPVGTVRSRIF).

This sequence belongs to the sigma-70 factor family. ECF subfamily.

In terms of biological role, sigma factors are initiation factors that promote the attachment of RNA polymerase to specific initiation sites and are then released. This sigma factor regulates genes such as algD, involved in alginate biosynthesis. In Pseudomonas aeruginosa (strain ATCC 15692 / DSM 22644 / CIP 104116 / JCM 14847 / LMG 12228 / 1C / PRS 101 / PAO1), this protein is RNA polymerase sigma-H factor (algU).